The sequence spans 204 residues: Probable GTP-binding protein EngB (204 aa).

The EngB-type G domain occupies 22–197 (GFPEIAFVGR…LAEFDNVLSI (176 aa)). Residues 30-37 (GRSNVGKS), 57-61 (GKTRQ), 75-78 (DLPG), 144-147 (NKVD), and 176-178 (FSA) each bind GTP. The Mg(2+) site is built by Ser-37 and Thr-59.

It belongs to the TRAFAC class TrmE-Era-EngA-EngB-Septin-like GTPase superfamily. EngB GTPase family. It depends on Mg(2+) as a cofactor.

Its function is as follows. Necessary for normal cell division and for the maintenance of normal septation. The chain is Probable GTP-binding protein EngB from Ruminiclostridium cellulolyticum (strain ATCC 35319 / DSM 5812 / JCM 6584 / H10) (Clostridium cellulolyticum).